Here is a 135-residue protein sequence, read N- to C-terminus: Class I hydrophobin 2 (135 aa).

A signal peptide spans 1-20 (MFARLTSTLFALAAVSAVFA). 4 disulfides stabilise this stretch: Cys29/Cys114, Cys36/Cys107, Cys37/Cys73, and Cys115/Cys128. N-linked (GlcNAc...) asparagine glycans are attached at residues Asn117 and Asn132.

This sequence belongs to the fungal hydrophobin family. Self-assembles to form functional amyloid fibrils called rodlets. Self-assembly into fibrillar rodlets occurs spontaneously at hydrophobic:hydrophilic interfaces and the rodlets further associate laterally to form amphipathic monolayers.

It localises to the secreted. The protein localises to the cell wall. In terms of biological role, aerial growth, conidiation, and dispersal of filamentous fungi in the environment rely upon a capability of their secreting small amphipathic proteins called hydrophobins (HPBs) with low sequence identity. Class I can self-assemble into an outermost layer of rodlet bundles on aerial cell surfaces, conferring cellular hydrophobicity that supports fungal growth, development and dispersal; whereas Class II form highly ordered films at water-air interfaces through intermolecular interactions but contribute nothing to the rodlet structure. The chain is Class I hydrophobin 2 from Coprinopsis cinerea (strain Okayama-7 / 130 / ATCC MYA-4618 / FGSC 9003) (Inky cap fungus).